The sequence spans 363 residues: Succinyl-diaminopimelate desuccinylase (363 aa).

Residue histidine 63 coordinates Zn(2+). Aspartate 65 is an active-site residue. Position 94 (aspartate 94) interacts with Zn(2+). Glutamate 123 serves as the catalytic Proton acceptor. Zn(2+)-binding residues include glutamate 124, glutamate 152, and histidine 337.

Belongs to the peptidase M20A family. DapE subfamily. As to quaternary structure, homodimer. The cofactor is Zn(2+). Co(2+) is required as a cofactor.

It carries out the reaction N-succinyl-(2S,6S)-2,6-diaminopimelate + H2O = (2S,6S)-2,6-diaminopimelate + succinate. It participates in amino-acid biosynthesis; L-lysine biosynthesis via DAP pathway; LL-2,6-diaminopimelate from (S)-tetrahydrodipicolinate (succinylase route): step 3/3. Its function is as follows. Catalyzes the hydrolysis of N-succinyl-L,L-diaminopimelic acid (SDAP), forming succinate and LL-2,6-diaminopimelate (DAP), an intermediate involved in the bacterial biosynthesis of lysine and meso-diaminopimelic acid, an essential component of bacterial cell walls. The sequence is that of Succinyl-diaminopimelate desuccinylase from Campylobacter concisus (strain 13826).